A 1079-amino-acid chain; its full sequence is Adhesion G-protein coupled receptor F3 (1079 aa).

An N-terminal signal peptide occupies residues 1-25; that stretch reads MVCSAAPLLLLATTLPLLGSPVAQA. Residues 26–775 lie on the Extracellular side of the membrane; sequence SQPVSETGVR…EEPALALLTQ (750 aa). Residues Asn188, Asn264, Asn301, Asn382, Asn441, and Asn648 are each glycosylated (N-linked (GlcNAc...) asparagine). The GAIN-B domain maps to 599–765; sequence HPFAFSLPNV…SVLMSPHTVP (167 aa). 2 disulfide bridges follow: Cys715–Cys747 and Cys734–Cys749. Positions 715-765 are GPS; it reads CVFWDHSLFQGRGGWSKEGCQAQVASASPTAQCLCQHLTAFSVLMSPHTVP. A helical membrane pass occupies residues 776–796; it reads VGLGASILALLVCLGVYWLVW. Over 797 to 811 the chain is Cytoplasmic; sequence RVVVRNKISYFRHAA. Residues 812 to 832 traverse the membrane as a helical segment; that stretch reads LLNMVFCLLAADTCFLGAPFL. Over 833-851 the chain is Extracellular; sequence SPGPRSPLCLAAAFLCHFL. Residues 852–874 traverse the membrane as a helical segment; that stretch reads YLATFFWMLAQALVLAHQLLFVF. Topologically, residues 875 to 881 are cytoplasmic; that stretch reads HQLAKHR. A helical transmembrane segment spans residues 882–902; it reads VLPLMVLLGYLCPLGLAGVTL. Topologically, residues 903–928 are extracellular; that stretch reads GLYLPQGQYLREGECWLDGKGGALYT. The helical transmembrane segment at 929-949 threads the bilayer; sequence FVGPVLAIIGVNGLVLAMAML. Residues 950–973 lie on the Cytoplasmic side of the membrane; it reads KLLRPSLSEGPPAEKRQALLGVIK. A helical membrane pass occupies residues 974 to 994; it reads ALLILTPIFGLTWGLGLATLL. Residues 995–1002 are Extracellular-facing; sequence EEVSTVPH. The chain crosses the membrane as a helical span at residues 1003–1023; the sequence is YIFTILNTLQGVFILLFGCLM. Residues 1024-1079 lie on the Cytoplasmic side of the membrane; sequence DRKIQEALRKRFCRAQAPSSTISLVSCCLQILSCASKSMSEGIPWPSSEDMGTARS.

Belongs to the G-protein coupled receptor 2 family. Adhesion G-protein coupled receptor (ADGR) subfamily. As to quaternary structure, heterodimer of 2 chains generated by proteolytic processing; the large extracellular N-terminal fragment and the membrane-bound C-terminal fragment predominantly remain associated and non-covalently linked. In terms of processing, autoproteolytically processed at the GPS region of the GAIN-B domain; this cleavage modulates receptor activity.

It is found in the membrane. Orphan receptor. The polypeptide is Adhesion G-protein coupled receptor F3 (ADGRF3) (Homo sapiens (Human)).